The sequence spans 513 residues: Alpha,alpha-trehalose-phosphate synthase [UDP-forming] (513 aa).

Y40 is subject to Phosphotyrosine. D-glucose 6-phosphate-binding residues include Y104 and D158. Residues R294 and K299 each contribute to the UDP site. The UDP-alpha-D-glucose site is built by R294 and K299. D-glucose 6-phosphate is bound at residue R332. A UDP-alpha-D-glucose-binding site is contributed by 393–401 (DGMNLVSYE). 397–401 (LVSYE) contributes to the UDP binding site. S503 carries the phosphoserine modification.

The protein belongs to the glycosyltransferase 20 family. In terms of assembly, homomer. Component of the trehalose synthase complex that contains at least tps1, ntp1 and tpp1. Interacts with tpp1. Interacts with ntp1; the interaction is independent of stress conditions.

The protein localises to the cytoplasm. It localises to the nucleus. It carries out the reaction D-glucose 6-phosphate + UDP-alpha-D-glucose = alpha,alpha-trehalose 6-phosphate + UDP + H(+). Its pathway is carbohydrate biosynthesis. Functionally, synthase catalytic subunit of the trehalose synthase complex that catalyzes the production of trehalose from glucose-6-phosphate and UDP-alpha-D-glucose in a two step process. The disaccharide trehalose serves as a storage carbohydrate that is mobilized during nutrient stress and spore germination. Together with ntp1, regulates the level of trehalose as a protectant for cell integrity during thermal and osmotic stress. This Schizosaccharomyces pombe (strain 972 / ATCC 24843) (Fission yeast) protein is Alpha,alpha-trehalose-phosphate synthase [UDP-forming].